The following is a 339-amino-acid chain: Fructose-1,6-bisphosphatase class 1 (339 aa).

Mg(2+) contacts are provided by E94, D116, L118, and D119. Residues 119 to 122 (DGSS), N210, and K276 each bind substrate. E282 serves as a coordination point for Mg(2+).

This sequence belongs to the FBPase class 1 family. In terms of assembly, homotetramer. The cofactor is Mg(2+).

Its subcellular location is the cytoplasm. The catalysed reaction is beta-D-fructose 1,6-bisphosphate + H2O = beta-D-fructose 6-phosphate + phosphate. Its pathway is carbohydrate biosynthesis; gluconeogenesis. The sequence is that of Fructose-1,6-bisphosphatase class 1 from Burkholderia ambifaria (strain MC40-6).